Here is a 189-residue protein sequence, read N- to C-terminus: NADH-quinone oxidoreductase subunit B (189 aa).

[4Fe-4S] cluster contacts are provided by Cys-39, Cys-40, Cys-104, and Cys-135.

Belongs to the complex I 20 kDa subunit family. In terms of assembly, NDH-1 is composed of 14 different subunits. Subunits NuoB, C, D, E, F, and G constitute the peripheral sector of the complex. Requires [4Fe-4S] cluster as cofactor.

It is found in the cell inner membrane. The catalysed reaction is a quinone + NADH + 5 H(+)(in) = a quinol + NAD(+) + 4 H(+)(out). Functionally, NDH-1 shuttles electrons from NADH, via FMN and iron-sulfur (Fe-S) centers, to quinones in the respiratory chain. The immediate electron acceptor for the enzyme in this species is believed to be a menaquinone. Couples the redox reaction to proton translocation (for every two electrons transferred, four hydrogen ions are translocated across the cytoplasmic membrane), and thus conserves the redox energy in a proton gradient. The protein is NADH-quinone oxidoreductase subunit B of Chlorobaculum tepidum (strain ATCC 49652 / DSM 12025 / NBRC 103806 / TLS) (Chlorobium tepidum).